The chain runs to 216 residues: GTP-binding nuclear protein Ran, testis-specific isoform (216 aa).

At Ala-2 the chain carries N-acetylalanine. The region spanning 7–171 (PQVQFKVVLV…FWLARKLIGD (165 aa)) is the Small GTPase Ran-type domain. Residue 17-24 (GDGGTGKT) participates in GTP binding. The residue at position 24 (Thr-24) is a Phosphothreonine. The interval 37–45 (KEYVATLGV) is switch-I. Lys-60 is modified (N6-acetyllysine). 65–69 (DTAGQ) is a GTP binding site. The tract at residues 68–84 (GQEKFGGLRDGYYIQAQ) is switch-II. N6-acetyllysine; alternate is present on Lys-71. Residue Lys-71 forms a Glycyl lysine isopeptide (Lys-Gly) (interchain with G-Cter in SUMO2); alternate linkage. Lys-71 participates in a covalent cross-link: Glycyl lysine isopeptide (Lys-Gly) (interchain with G-Cter in ubiquitin); alternate. Lys-99 is subject to N6-acetyllysine. 122 to 125 (NKVD) serves as a coordination point for GTP. N6-acetyllysine is present on Lys-134. N6-acetyllysine; alternate is present on Lys-159. Lys-159 carries the N6-succinyllysine; alternate modification.

This sequence belongs to the small GTPase superfamily. Ran family. In terms of tissue distribution, testis specific.

It is found in the nucleus. It carries out the reaction GTP + H2O = GDP + phosphate + H(+). GTP-binding protein involved in nucleocytoplasmic transport. Required for the import of protein into the nucleus and also for RNA export. Involved in chromatin condensation and control of cell cycle. The polypeptide is GTP-binding nuclear protein Ran, testis-specific isoform (Rasl2-9) (Mus musculus (Mouse)).